Reading from the N-terminus, the 340-residue chain is MITLQNVVKEYTSRNNKVLAVDHVDLEIEQGEIFGVVGYSGAGKSTLIRMFNGLELPTEGSVEVDNLLISQIRGSKLRKARQQIGMIFQHFNLLWSRTVAENIAFPLEIAGVRGEKRRFRVNELIRLVGLEGKENAYPAELSGGQKQRVGIARALANNPKVLLCDEATSALDPQTTDEVLELLLDINKRLNLTIIVITHEMHVIRKICNRVAVMENGKVAELGDVLDVFRHPKEKVTQRFVRQVTDSDETEELIHLLLDNYAEGKIVKLLFMSENATQPVISQVAKENDVMLNVLHGNLTQTQNGAYGTLYVQVLGTEEAIEASLTQLRQLKVETEVLER.

The ABC transporter domain occupies 2-241; that stretch reads ITLQNVVKEY…PKEKVTQRFV (240 aa). Position 38-45 (38-45) interacts with ATP; sequence GYSGAGKS.

This sequence belongs to the ABC transporter superfamily. Methionine importer (TC 3.A.1.24) family. As to quaternary structure, the complex is composed of two ATP-binding proteins (MetN), two transmembrane proteins (MetI) and a solute-binding protein (MetQ).

Its subcellular location is the cell membrane. The enzyme catalyses L-methionine(out) + ATP + H2O = L-methionine(in) + ADP + phosphate + H(+). It carries out the reaction D-methionine(out) + ATP + H2O = D-methionine(in) + ADP + phosphate + H(+). In terms of biological role, part of the ABC transporter complex MetNIQ involved in methionine import. Responsible for energy coupling to the transport system. The protein is Methionine import ATP-binding protein MetN 2 of Listeria innocua serovar 6a (strain ATCC BAA-680 / CLIP 11262).